The sequence spans 256 residues: MQPAKEVTKASDGSLLGDLGHTPLSKKEGIKWQRPRLSRQALMRCCLVKWILSSTAPQGSDSSDSELELSTVRHQPEGLDQLQAQTKFTKKELQSLYRGFKNECPTGLVDEDTFKLIYAQFFPQGDATTYAHFLFNAFDADGNGAIHFEDFVVGLSILLRGTVHEKLKWAFNLYDINKDGYITKEEMLAIMKSIYDMMGRHTYPILREDAPAEHVERFFEKMDRNQDGVVTIEEFLEACQKDENIMSSMQLFENVI.

The interval 1-20 is disordered; sequence MQPAKEVTKASDGSLLGDLG. The residue at position 14 (S14) is a Phosphoserine. K26 participates in a covalent cross-link: Glycyl lysine isopeptide (Lys-Gly) (interchain with G-Cter in SUMO1). 2 S-palmitoyl cysteine lipidation sites follow: C45 and C46. S60 carries the phosphoserine modification. S63 bears the Phosphoserine; by CK1 mark. The EF-hand 1; degenerate domain maps to 67 to 123; that stretch reads LELSTVRHQPEGLDQLQAQTKFTKKELQSLYRGFKNECPTGLVDEDTFKLIYAQFFP. A Glycyl lysine isopeptide (Lys-Gly) (interchain with G-Cter in SUMO1) cross-link involves residue K90. EF-hand domains are found at residues 126–161, 162–197, and 210–245; these read DATT…LLRG, TVHE…IYDM, and APAE…DENI. Positions 175, 177, 179, 181, 186, 223, 225, 227, and 234 each coordinate Ca(2+). The interaction with KCND2 stretch occupies residues 243–256; sequence ENIMSSMQLFENVI.

It belongs to the recoverin family. As to quaternary structure, binds to DNA as a homomultimer. Dimerization is induced by binding to calcium. Interacts with the C-terminus of PSEN1 and PSEN2 and with PSEN2 CTF subunit. Associates with KCN1. Component of heteromultimeric potassium channels. Identified in potassium channel complexes containing KCND1, KCND2, KCND3, KCNIP1, KCNIP2, KCNIP3, KCNIP4, DPP6 and DPP10. Interacts with KCND2 and KCND3. In terms of processing, palmitoylated. Palmitoylation enhances association with the plasma membrane. Proteolytically cleaved by caspase-3. Post-translationally, phosphorylation at Ser-63 inhibits cleavage by CASP3. In terms of tissue distribution, highly expressed in brain. Widely expressed at lower levels. Expression levels are elevated in brain cortex regions affected by Alzheimer disease.

The protein localises to the cytoplasm. Its subcellular location is the cell membrane. It localises to the endoplasmic reticulum. It is found in the golgi apparatus. The protein resides in the nucleus. In terms of biological role, calcium-dependent transcriptional repressor that binds to the DRE element of genes including PDYN and FOS. Affinity for DNA is reduced upon binding to calcium and enhanced by binding to magnesium. Seems to be involved in nociception. Functionally, regulatory subunit of Kv4/D (Shal)-type voltage-gated rapidly inactivating A-type potassium channels, such as KCND2/Kv4.2 and KCND3/Kv4.3. Modulates channel expression at the cell membrane, gating characteristics, inactivation kinetics and rate of recovery from inactivation in a calcium-dependent and isoform-specific manner. Its function is as follows. May play a role in the regulation of PSEN2 proteolytic processing and apoptosis. Together with PSEN2 involved in modulation of amyloid-beta formation. This Homo sapiens (Human) protein is Calsenilin (KCNIP3).